Here is a 306-residue protein sequence, read N- to C-terminus: MALDFLAGCAGGVAGVIVGHPFDTVKVRLQVQNTEKPQYRGTLHCFQSIIKQESVLGLYKGLGSPLMGLTFINALVFGVQGNTLRALGQDSPLNQFLAGAAAGAIQCVICCPMELAKTRLQLQAAGPARAYKGSLDCLVQIYRHEGLRGINRGMVSTLLRETPSFGVYFLTYDVLTRAMGCEPGDRLLVPKLLLAGGTSGITSWLSTYPMDVVKSRLQADGLQGTPRYRGIVDCMRQSYQAEGWQVFTRGLASTLLRAFPVNAATFATVTVVLTYIRGEEDQVDSEAAPGASTTPAGPALAQPSSL.

A run of 6 helical transmembrane segments spans residues 2–22 (ALDF…GHPF), 61–81 (GLGS…GVQG), 96–116 (FLAG…MELA), 153–172 (GMVS…FLTY), 187–207 (LLVP…WLST), and 255–275 (LLRA…VLTY). 3 Solcar repeats span residues 2 to 86 (ALDF…TLRA), 90 to 178 (DSPL…LTRA), and 190 to 275 (PKLL…VLTY). The tract at residues 283-306 (VDSEAAPGASTTPAGPALAQPSSL) is disordered. Positions 287 to 306 (AAPGASTTPAGPALAQPSSL) are enriched in low complexity.

This sequence belongs to the mitochondrial carrier (TC 2.A.29) family.

Its subcellular location is the mitochondrion inner membrane. The catalysed reaction is L-lysine(out) + L-arginine(in) = L-lysine(in) + L-arginine(out). It carries out the reaction L-histidine(out) + L-arginine(in) = L-histidine(in) + L-arginine(out). It catalyses the reaction L-ornithine(in) + L-arginine(out) = L-ornithine(out) + L-arginine(in). The enzyme catalyses L-homoarginine(in) + L-arginine(out) = L-homoarginine(out) + L-arginine(in). The catalysed reaction is N(omega)-methyl-L-arginine(in) + L-arginine(out) = N(omega)-methyl-L-arginine(out) + L-arginine(in). It carries out the reaction L-arginine(in) = L-arginine(out). It catalyses the reaction L-lysine(in) = L-lysine(out). The enzyme catalyses L-ornithine(in) = L-ornithine(out). The catalysed reaction is L-histidine(out) = L-histidine(in). Mitochondrial transporter of arginine, lysine, homoarginine, methylarginine and, to a much lesser extent, ornithine and histidine. Does not transport carnitine nor acylcarnitines. Functions by both counter-exchange and uniport mechanisms. Plays a physiological role in the import of basic amino acids into mitochondria for mitochondrial protein synthesis and amino acid degradation. This chain is Mitochondrial basic amino acids transporter (Slc25a29), found in Rattus norvegicus (Rat).